Here is a 510-residue protein sequence, read N- to C-terminus: Hepatic triacylglycerol lipase (510 aa).

An N-terminal signal peptide occupies residues M1–A21. N79 carries N-linked (GlcNAc...) asparagine glycosylation. S169 functions as the Nucleophile in the catalytic mechanism. D195 acts as the Charge relay system in catalysis. The interval C255–C278 is essential for determining substrate specificity. The active-site Charge relay system is the H280. The PLAT domain occupies Y353 to N487. N398 carries N-linked (GlcNAc...) asparagine glycosylation.

It belongs to the AB hydrolase superfamily. Lipase family. In terms of assembly, homodimer.

Its subcellular location is the secreted. The enzyme catalyses a triacylglycerol + H2O = a diacylglycerol + a fatty acid + H(+). The catalysed reaction is a 1-acyl-sn-glycero-3-phosphocholine + H2O = sn-glycerol 3-phosphocholine + a fatty acid + H(+). It catalyses the reaction a 1,2-diacyl-sn-glycero-3-phosphocholine + H2O = a 2-acyl-sn-glycero-3-phosphocholine + a fatty acid + H(+). It carries out the reaction 1,2,3-tri-(9Z-octadecenoyl)-glycerol + H2O = di-(9Z)-octadecenoylglycerol + (9Z)-octadecenoate + H(+). The enzyme catalyses 1,2-di-(9Z-octadecenoyl)-sn-glycero-3-phosphocholine + H2O = (9Z-octadecenoyl)-sn-glycero-3-phosphocholine + (9Z)-octadecenoate + H(+). The catalysed reaction is 1,2,3-tributanoylglycerol + H2O = dibutanoylglycerol + butanoate + H(+). It catalyses the reaction 1,2-dihexadecanoyl-sn-glycero-3-phosphocholine + H2O = hexadecanoyl-sn-glycero-3-phosphocholine + hexadecanoate + H(+). It carries out the reaction 1,2-di-(9Z-octadecenoyl)-sn-glycerol + H2O = 2-(9Z-octadecenoyl)-glycerol + (9Z)-octadecenoate + H(+). The enzyme catalyses 1,2,3-tri-(9Z-octadecenoyl)-glycerol + H2O = 2,3-di-(9Z)-octadecenoyl-sn-glycerol + (9Z)-octadecenoate + H(+). The catalysed reaction is 1-(9Z-octadecenoyl)-sn-glycero-3-phospho-L-serine + H2O = sn-glycero-3-phospho-L-serine + (9Z)-octadecenoate + H(+). It catalyses the reaction 1-hexadecanoyl-sn-glycero-3-phosphocholine + H2O = sn-glycerol 3-phosphocholine + hexadecanoate + H(+). It carries out the reaction 1,3-di-(9Z-octadecenoyl)-glycerol + H2O = 3-(9Z-octadecenoyl)-sn-glycerol + (9Z)-octadecenoate + H(+). Its function is as follows. Catalyzes the hydrolysis of triglycerides and phospholipids present in circulating plasma lipoproteins, including chylomicrons, intermediate density lipoproteins (IDL), low density lipoproteins (LDL) of large size and high density lipoproteins (HDL), releasing free fatty acids (FFA) and smaller lipoprotein particles. Also exhibits lysophospholipase activity. Can hydrolyze both neutral lipid and phospholipid substrates but shows a greater binding affinity for neutral lipid substrates than phospholipid substrates. In native LDL, preferentially hydrolyzes the phosphatidylcholine species containing polyunsaturated fatty acids at sn-2 position. In Mus musculus (Mouse), this protein is Hepatic triacylglycerol lipase (Lipc).